A 93-amino-acid chain; its full sequence is Molybdopterin synthase sulfur carrier subunit (93 aa).

At G93 the chain carries 1-thioglycine; alternate. Residue G93 is modified to Glycyl adenylate; alternate.

The protein belongs to the MoaD family. MOCS2A subfamily. Heterotetramer; composed of 2 small (MOCS2A) and 2 large (MOCS2B) subunits. C-terminal thiocarboxylation occurs in 2 steps, it is first acyl-adenylated (-COAMP) via the hesA/moeB/thiF part of UBA4, then thiocarboxylated (-COSH) via the rhodanese domain of UBA4.

The protein localises to the cytoplasm. It participates in cofactor biosynthesis; molybdopterin biosynthesis. Acts as a sulfur carrier required for molybdopterin biosynthesis. Component of the molybdopterin synthase complex that catalyzes the conversion of precursor Z into molybdopterin by mediating the incorporation of 2 sulfur atoms into precursor Z to generate a dithiolene group. In the complex, serves as sulfur donor by being thiocarboxylated (-COSH) at its C-terminus by UBA4. After interaction with MOCS2B, the sulfur is then transferred to precursor Z to form molybdopterin. The sequence is that of Molybdopterin synthase sulfur carrier subunit from Mycosarcoma maydis (Corn smut fungus).